Consider the following 188-residue polypeptide: UPF0461 protein C5orf24 (188 aa).

A compositionally biased stretch (polar residues) spans Met-1–Pro-10. The tract at residues Met-1–Cys-20 is disordered. Position 37 is a phosphoserine (Ser-37). Lys-75 participates in a covalent cross-link: Glycyl lysine isopeptide (Lys-Gly) (interchain with G-Cter in SUMO2). The interval Lys-79–Pro-142 is disordered. A compositionally biased stretch (basic residues) spans Lys-80 to Arg-92. Over residues Ser-94–Gly-107 the composition is skewed to polar residues. A phosphoserine mark is found at Ser-121 and Ser-180. Lys-184 is covalently cross-linked (Glycyl lysine isopeptide (Lys-Gly) (interchain with G-Cter in SUMO2)).

Belongs to the UPF0461 family.

This Homo sapiens (Human) protein is UPF0461 protein C5orf24 (C5orf24).